Reading from the N-terminus, the 316-residue chain is 4-hydroxy-3-methylbut-2-enyl diphosphate reductase (316 aa).

Cys12 lines the [4Fe-4S] cluster pocket. (2E)-4-hydroxy-3-methylbut-2-enyl diphosphate-binding residues include His41 and His74. Residues His41 and His74 each contribute to the dimethylallyl diphosphate site. Isopentenyl diphosphate contacts are provided by His41 and His74. Position 96 (Cys96) interacts with [4Fe-4S] cluster. His124 is a (2E)-4-hydroxy-3-methylbut-2-enyl diphosphate binding site. His124 contacts dimethylallyl diphosphate. His124 lines the isopentenyl diphosphate pocket. The active-site Proton donor is the Glu126. Thr167 is a binding site for (2E)-4-hydroxy-3-methylbut-2-enyl diphosphate. Position 197 (Cys197) interacts with [4Fe-4S] cluster. Ser225, Ser226, Asn227, and Ser269 together coordinate (2E)-4-hydroxy-3-methylbut-2-enyl diphosphate. Ser225, Ser226, Asn227, and Ser269 together coordinate dimethylallyl diphosphate. The isopentenyl diphosphate site is built by Ser225, Ser226, Asn227, and Ser269.

It belongs to the IspH family. Homodimer. It depends on [4Fe-4S] cluster as a cofactor.

The enzyme catalyses isopentenyl diphosphate + 2 oxidized [2Fe-2S]-[ferredoxin] + H2O = (2E)-4-hydroxy-3-methylbut-2-enyl diphosphate + 2 reduced [2Fe-2S]-[ferredoxin] + 2 H(+). The catalysed reaction is dimethylallyl diphosphate + 2 oxidized [2Fe-2S]-[ferredoxin] + H2O = (2E)-4-hydroxy-3-methylbut-2-enyl diphosphate + 2 reduced [2Fe-2S]-[ferredoxin] + 2 H(+). The protein operates within isoprenoid biosynthesis; dimethylallyl diphosphate biosynthesis; dimethylallyl diphosphate from (2E)-4-hydroxy-3-methylbutenyl diphosphate: step 1/1. It functions in the pathway isoprenoid biosynthesis; isopentenyl diphosphate biosynthesis via DXP pathway; isopentenyl diphosphate from 1-deoxy-D-xylulose 5-phosphate: step 6/6. Its function is as follows. Catalyzes the conversion of 1-hydroxy-2-methyl-2-(E)-butenyl 4-diphosphate (HMBPP) into a mixture of isopentenyl diphosphate (IPP) and dimethylallyl diphosphate (DMAPP). Acts in the terminal step of the DOXP/MEP pathway for isoprenoid precursor biosynthesis. The protein is 4-hydroxy-3-methylbut-2-enyl diphosphate reductase of Salmonella paratyphi A (strain ATCC 9150 / SARB42).